We begin with the raw amino-acid sequence, 290 residues long: Porphobilinogen deaminase (290 aa).

Residue Cys238 is modified to S-(dipyrrolylmethanemethyl)cysteine.

It belongs to the HMBS family. As to quaternary structure, monomer. It depends on dipyrromethane as a cofactor.

The enzyme catalyses 4 porphobilinogen + H2O = hydroxymethylbilane + 4 NH4(+). Its pathway is porphyrin-containing compound metabolism; protoporphyrin-IX biosynthesis; coproporphyrinogen-III from 5-aminolevulinate: step 2/4. Its function is as follows. Tetrapolymerization of the monopyrrole PBG into the hydroxymethylbilane pre-uroporphyrinogen in several discrete steps. The sequence is that of Porphobilinogen deaminase from Caldicellulosiruptor saccharolyticus (strain ATCC 43494 / DSM 8903 / Tp8T 6331).